The primary structure comprises 276 residues: Small ribosomal subunit protein uS3 (276 aa).

A KH type-2 domain is found at 17–86 (VDEYLAKELD…NPQIDVQDVG (70 aa)). The tract at residues 193–276 (FQINAPPKEP…AETHGDIQDR (84 aa)) is disordered. The segment covering 214-227 (EAEPSQAAETQEQQ) has biased composition (low complexity). Composition is skewed to basic and acidic residues over residues 228 to 240 (AGEK…RLLD) and 258 to 276 (PESR…IQDR).

Belongs to the universal ribosomal protein uS3 family. Part of the 30S ribosomal subunit.

Functionally, binds the lower part of the 30S subunit head. This Methanothrix thermoacetophila (strain DSM 6194 / JCM 14653 / NBRC 101360 / PT) (Methanosaeta thermophila) protein is Small ribosomal subunit protein uS3.